The sequence spans 314 residues: Hydroxyacyl-coenzyme A dehydrogenase, mitochondrial (314 aa).

A mitochondrion-targeting transit peptide spans 1–12 (MAFVTRQFMRSV). NAD(+)-binding positions include 34 to 39 (GGGLMG) and Asp57. Ser73 and Lys80 together coordinate CoA. Lys80 carries the post-translational modification N6-succinyllysine. An N6-acetyllysine; alternate mark is found at Lys81 and Lys87. Lys81 and Lys87 each carry N6-succinyllysine; alternate. Glu122 provides a ligand contact to NAD(+). Lys125 bears the N6-acetyllysine mark. Lys127 lines the NAD(+) pocket. Residue Lys127 is modified to N6-(2-hydroxyisobutyryl)lysine. Position 136 is an N6-acetyllysine; alternate (Lys136). Position 136 is an N6-succinyllysine; alternate (Lys136). Positions 149 and 173 each coordinate NAD(+). Ser149 provides a ligand contact to CoA. Lys179 carries the N6-acetyllysine modification. Lys185, Lys192, and Lys202 each carry N6-acetyllysine; alternate. 3 positions are modified to N6-succinyllysine; alternate: Lys185, Lys192, and Lys202. Lys206 is subject to N6-succinyllysine. 2 positions are modified to N6-acetyllysine; alternate: Lys212 and Lys241. 2 positions are modified to N6-succinyllysine; alternate: Lys212 and Lys241. Lys305 serves as a coordination point for NAD(+). At Lys312 the chain carries N6-acetyllysine; alternate. Lys312 carries the N6-succinyllysine; alternate modification.

This sequence belongs to the 3-hydroxyacyl-CoA dehydrogenase family. In terms of assembly, homodimer. Interacts with GLUD1; this interaction inhibits the activation of glutamate dehydrogenase 1 (GLUD1). Post-translationally, succinylation at Lys-81, adjacent to a coenzyme A binding site. Desuccinylated by SIRT5. Expressed in liver, kidney, pancreas, heart and skeletal muscle.

The protein resides in the mitochondrion matrix. It catalyses the reaction a (3S)-3-hydroxyacyl-CoA + NAD(+) = a 3-oxoacyl-CoA + NADH + H(+). The enzyme catalyses (3S)-3-hydroxybutanoyl-CoA + NAD(+) = acetoacetyl-CoA + NADH + H(+). The catalysed reaction is (3S)-hydroxydecanoyl-CoA + NAD(+) = 3-oxodecanoyl-CoA + NADH + H(+). It carries out the reaction (3S)-hydroxyhexadecanoyl-CoA + NAD(+) = 3-oxohexadecanoyl-CoA + NADH + H(+). Its pathway is lipid metabolism; fatty acid beta-oxidation. Mitochondrial fatty acid beta-oxidation enzyme that catalyzes the third step of the beta-oxidation cycle for medium and short-chain 3-hydroxy fatty acyl-CoAs (C4 to C10). Plays a role in the control of insulin secretion by inhibiting the activation of glutamate dehydrogenase 1 (GLUD1), an enzyme that has an important role in regulating amino acid-induced insulin secretion. Plays a role in the maintenance of normal spermatogenesis through the reduction of fatty acid accumulation in the testes. This chain is Hydroxyacyl-coenzyme A dehydrogenase, mitochondrial (HADH), found in Homo sapiens (Human).